A 119-amino-acid chain; its full sequence is DNA-binding protein TubR (119 aa).

Homodimer. Binds to TubZ filaments via the C-terminus of TubZ. DNA is not required for binding to TubZ.

A DNA-binding protein that is part of the type III plasmid partition system used to ensure correct segregation of the pBc10987 plasmid. Binds TubZ filaments but does not influence the GTPase activity of TubZ with or without DNA. Cooperatively binds to multiple regions in tubC (centromere-like site) upstream of its own gene with consensus sequence N(T/A)ATTNC(C/G)GNAAT(A/T)N; probably forms an extended DNA-protein filament. Binds sites in its own promoter region and presumably represses its expression; its effect on RNA expression has not been shown. Does not specifically bind to the putative origin of replication on pBc10987. The protein is DNA-binding protein TubR of Bacillus cereus (strain ATCC 10987 / NRS 248).